The sequence spans 437 residues: Sonic hedgehog protein (437 aa).

Residues 1-24 (MLLLLARCFLVILASSLLVCPGLA) form the signal peptide. The N-palmitoyl cysteine moiety is linked to residue Cys25. The Cardin-Weintraub signature appears at 33-39 (KRRHPKK). Residues Glu90, Glu91, Asp96, Thr126, Glu127, Asp130, and Asp132 each contribute to the Ca(2+) site. His141, Asp148, and His183 together coordinate Zn(2+). The Cholesterol glycine ester moiety is linked to residue Gly198. Asn279 carries an N-linked (GlcNAc...) asparagine glycan.

This sequence belongs to the hedgehog family. Interacts with HHATL/GUP1 which negatively regulates HHAT-mediated palmitoylation of the SHH N-terminus. Interacts with BOC and CDON. Interacts with HHIP. Interacts with DISP1 via its cholesterol anchor. Interacts with SCUBE2. Interacts with glypican GPC3. As to quaternary structure, multimer. In terms of processing, the C-terminal domain displays an autoproteolysis activity and a cholesterol transferase activity. Both activities result in the cleavage of the full-length protein and covalent attachment of a cholesterol moiety to the C-terminal of the newly generated N-terminal fragment (ShhN). Cholesterylation is required for the sonic hedgehog protein N-product targeting to lipid rafts and multimerization. ShhN is the active species in both local and long-range signaling, whereas the C-product (ShhC) is degraded in the endoplasmic reticulum. Post-translationally, N-palmitoylation by HHAT of ShhN is required for sonic hedgehog protein N-product multimerization and full activity. It is a prerequisite for the membrane-proximal positioning and the subsequent shedding of this N-terminal peptide. The lipidated N- and C-terminal peptides of ShhNp can be cleaved (shedding). The N-terminal palmitoylated peptide is cleaved at the Cardin-Weintraub (CW) motif site. The cleavage reduced the interactions with heparan sulfate. The cleavage is enhanced by SCUBE2. Expressed in a number of embryonic tissues including the notochord, ventral neural tube, floor plate, lung bud, zone of polarizing activity and posterior distal mesenchyme of limbs. In the adult, expressed in lung and neural retina.

It localises to the endoplasmic reticulum membrane. Its subcellular location is the golgi apparatus membrane. The protein resides in the cell membrane. It carries out the reaction glycyl-L-cysteinyl-[protein] + cholesterol + H(+) = [protein]-C-terminal glycyl cholesterol ester + N-terminal L-cysteinyl-[protein]. In terms of biological role, the C-terminal part of the sonic hedgehog protein precursor displays an autoproteolysis and a cholesterol transferase activity. Both activities result in the cleavage of the full-length protein into two parts (ShhN and ShhC) followed by the covalent attachment of a cholesterol moiety to the C-terminal of the newly generated ShhN. Both activities occur in the reticulum endoplasmic. Once cleaved, ShhC is degraded in the endoplasmic reticulum. Functionally, the dually lipidated sonic hedgehog protein N-product (ShhNp) is a morphogen which is essential for a variety of patterning events during development. Induces ventral cell fate in the neural tube and somites. Involved in the patterning of the anterior-posterior axis of the developing limb bud. Essential for axon guidance. Binds to the patched (PTCH1) receptor, which functions in association with smoothened (SMO), to activate the transcription of target genes. In the absence of SHH, PTCH1 represses the constitutive signaling activity of SMO. This Mus musculus (Mouse) protein is Sonic hedgehog protein.